Reading from the N-terminus, the 286-residue chain is Thymidylate synthase (286 aa).

Residue Arg27 participates in dUMP binding. His57 serves as a coordination point for (6R)-5,10-methylene-5,6,7,8-tetrahydrofolate. 148-149 (RR) contributes to the dUMP binding site. Cys168 functions as the Nucleophile in the catalytic mechanism. Residues 188–191 (RSAD), Asn199, and 229–231 (HLY) each bind dUMP. Residue Asp191 coordinates (6R)-5,10-methylene-5,6,7,8-tetrahydrofolate. (6R)-5,10-methylene-5,6,7,8-tetrahydrofolate is bound at residue Ala285.

The protein belongs to the thymidylate synthase family. Bacterial-type ThyA subfamily. As to quaternary structure, homodimer.

Its subcellular location is the cytoplasm. The catalysed reaction is dUMP + (6R)-5,10-methylene-5,6,7,8-tetrahydrofolate = 7,8-dihydrofolate + dTMP. Its pathway is pyrimidine metabolism; dTTP biosynthesis. Its function is as follows. Catalyzes the reductive methylation of 2'-deoxyuridine-5'-monophosphate (dUMP) to 2'-deoxythymidine-5'-monophosphate (dTMP) while utilizing 5,10-methylenetetrahydrofolate (mTHF) as the methyl donor and reductant in the reaction, yielding dihydrofolate (DHF) as a by-product. This enzymatic reaction provides an intracellular de novo source of dTMP, an essential precursor for DNA biosynthesis. The chain is Thymidylate synthase from Psychrobacter sp. (strain PRwf-1).